The chain runs to 240 residues: Uridylate kinase (240 aa).

Residue 13–16 (KLSG) coordinates ATP. Residues 21-26 (GDKGFG) are involved in allosteric activation by GTP. Gly-55 contacts UMP. ATP-binding residues include Gly-56 and Arg-60. Residues Asp-75 and 136–143 (IGNPYFST) contribute to the UMP site. Asn-164, Tyr-170, and Asp-173 together coordinate ATP.

This sequence belongs to the UMP kinase family. As to quaternary structure, homohexamer.

The protein resides in the cytoplasm. It catalyses the reaction UMP + ATP = UDP + ADP. It functions in the pathway pyrimidine metabolism; CTP biosynthesis via de novo pathway; UDP from UMP (UMPK route): step 1/1. Its activity is regulated as follows. Allosterically activated by GTP. Inhibited by UTP. Functionally, catalyzes the reversible phosphorylation of UMP to UDP. This is Uridylate kinase from Staphylococcus haemolyticus (strain JCSC1435).